The following is a 154-amino-acid chain: Myoglobin (154 aa).

One can recognise a Globin domain in the interval 2-148 (GLSDGEWQLV…FRNDIAAKYK (147 aa)). Ser-4 carries the phosphoserine modification. His-65 is a nitrite binding site. Residue His-65 participates in O2 binding. Thr-68 carries the post-translational modification Phosphothreonine. A heme b-binding site is contributed by His-94.

It belongs to the globin family. In terms of assembly, monomeric.

The protein resides in the cytoplasm. It is found in the sarcoplasm. It carries out the reaction Fe(III)-heme b-[protein] + nitric oxide + H2O = Fe(II)-heme b-[protein] + nitrite + 2 H(+). The enzyme catalyses H2O2 + AH2 = A + 2 H2O. Its function is as follows. Monomeric heme protein which primary function is to store oxygen and facilitate its diffusion within muscle tissues. Reversibly binds oxygen through a pentacoordinated heme iron and enables its timely and efficient release as needed during periods of heightened demand. Depending on the oxidative conditions of tissues and cells, and in addition to its ability to bind oxygen, it also has a nitrite reductase activity whereby it regulates the production of bioactive nitric oxide. Under stress conditions, like hypoxia and anoxia, it also protects cells against reactive oxygen species thanks to its pseudoperoxidase activity. The protein is Myoglobin (MB) of Lagostomus maximus (Plains viscacha).